Reading from the N-terminus, the 248-residue chain is 3-deoxy-manno-octulosonate cytidylyltransferase (248 aa).

The protein belongs to the KdsB family.

The protein localises to the cytoplasm. The catalysed reaction is 3-deoxy-alpha-D-manno-oct-2-ulosonate + CTP = CMP-3-deoxy-beta-D-manno-octulosonate + diphosphate. It functions in the pathway nucleotide-sugar biosynthesis; CMP-3-deoxy-D-manno-octulosonate biosynthesis; CMP-3-deoxy-D-manno-octulosonate from 3-deoxy-D-manno-octulosonate and CTP: step 1/1. It participates in bacterial outer membrane biogenesis; lipopolysaccharide biosynthesis. Its function is as follows. Activates KDO (a required 8-carbon sugar) for incorporation into bacterial lipopolysaccharide in Gram-negative bacteria. This chain is 3-deoxy-manno-octulosonate cytidylyltransferase, found in Chlorobium phaeobacteroides (strain BS1).